A 209-amino-acid chain; its full sequence is uncharacterized protein (209 aa).

Disordered stretches follow at residues 1-80 (MFVR…PPVE) and 164-197 (LPAGGAGEQEKEPVSRGSSRSSCSQRRPPPPGME). A compositionally biased stretch (low complexity) spans 178-189 (SRGSSRSSCSQR).

This is an uncharacterized protein from Homo sapiens (Human).